A 185-amino-acid chain; its full sequence is Elongation factor P (185 aa).

This sequence belongs to the elongation factor P family.

The protein localises to the cytoplasm. It functions in the pathway protein biosynthesis; polypeptide chain elongation. Involved in peptide bond synthesis. Stimulates efficient translation and peptide-bond synthesis on native or reconstituted 70S ribosomes in vitro. Probably functions indirectly by altering the affinity of the ribosome for aminoacyl-tRNA, thus increasing their reactivity as acceptors for peptidyl transferase. The chain is Elongation factor P from Pseudothermotoga lettingae (strain ATCC BAA-301 / DSM 14385 / NBRC 107922 / TMO) (Thermotoga lettingae).